The following is a 260-amino-acid chain: uncharacterized protein (260 aa).

An N-terminal signal peptide occupies residues 1–22 (MGYLKGFALYISILILIVFIAG). The N-palmitoyl cysteine moiety is linked to residue Cys-23. Cys-23 carries S-diacylglycerol cysteine lipidation.

This sequence belongs to the staphylococcal tandem lipoprotein family.

Its subcellular location is the cell membrane. This is an uncharacterized protein from Staphylococcus aureus (strain MSSA476).